A 164-amino-acid polypeptide reads, in one-letter code: uncharacterized protein (164 aa).

The first 22 residues, 1-22 (MKTNRSLVVIVSLITATLLLTA), serve as a signal peptide directing secretion. Cys-23 carries the N-palmitoyl cysteine lipid modification. A lipid anchor (S-diacylglycerol cysteine) is attached at Cys-23.

The protein localises to the cell membrane. This is an uncharacterized protein from Escherichia coli (strain K12).